We begin with the raw amino-acid sequence, 3726 residues long: Zinc finger homeobox protein 3 (3726 aa).

Disordered stretches follow at residues 1–79 and 95–129; these read MEGC…SKEV and MEHHCPGTHPPPALREESASDTSEEGEEESDVENL. The segment at 79–103 adopts a C2H2-type 1 zinc-finger fold; that stretch reads VSCNECSASFSSLQTYMEHHCPGTH. The span at 116-126 shows a compositional bias: acidic residues; that stretch reads TSEEGEEESDV. The C2H2-type 2 zinc-finger motif lies at 282 to 305; it reads LMCFLCKLSFGYVRSFVTHAVHDH. The segment at 417-557 is disordered; that stretch reads SVPLGPLASS…GPASTTSNSA (141 aa). S426 carries the post-translational modification Phosphoserine. T428 is subject to Phosphothreonine. Basic and acidic residues predominate over residues 431–459; sequence SEGKDSGAAEGDKQESGGHQDCFSEKVEP. Acidic residues-rich tracts occupy residues 460-491 and 500-510; these read AEEEEAEEEEEEEEEAEEEEEEEEEEEEEEEE and DLEEELEDSPS. Residues 528 to 557 show a composition bias toward polar residues; sequence SNPSISNSPLMPNVLQTLSRGPASTTSNSA. Residues S535 and S573 each carry the phosphoserine modification. Positions 590–621 are disordered; it reads DFADESANKDSATAPEPNESTEGDDGGFVPHH. C2H2-type zinc fingers lie at residues 641–664, 672–695, and 727–751; these read VECPKCDTVLGSSRSLGGHMTMMH, LKCPKCNWHYKYQQTLEAHMKEKH, and FRCEVCNYSTTTKGNLSIHMQSDKH. The C2H2-type 6; atypical zinc-finger motif lies at 805 to 829; sequence WRCEVCDYETNVARNLRIHMTSEKH. The segment at 946 to 969 adopts a C2H2-type 7; degenerate zinc-finger fold; sequence FQCAVCNKFTTDNLDMLGLHMNVE. The C2H2-type 8; atypical zinc finger occupies 985–1009; that stretch reads YQCKLCRYNTQLKANFQLHCKTDKH. The segment at 1041-1065 adopts a C2H2-type 9; atypical zinc-finger fold; it reads LKCNACDYYTNSLEKLRLHTVNSRH. The C2H2-type 10; atypical zinc finger occupies 1089–1113; the sequence is YHCVLCNYSTKAKLNLIQHVRSMKH. The disordered stretch occupies residues 1125–1228; the sequence is LQKGLPEEDE…KRPKASEEIK (104 aa). The segment covering 1149 to 1159 has biased composition (acidic residues); it reads DPEEPVEDAEG. Composition is skewed to polar residues over residues 1175 to 1191 and 1199 to 1217; these read GSGSEEGQSKRAASSSQ and SPATTKRTSFPGSSETPLS. S1207 is modified (phosphoserine). The segment at 1233-1256 adopts a C2H2-type 11; atypical zinc-finger fold; it reads YQCPYCKYSNADVNRLRVHAMTQH. The segment at 1262 to 1285 adopts a C2H2-type 12 zinc-finger fold; sequence LRCPLCQDMLNNKIHLQLHLTHLH. Positions 1320–1361 are disordered; it reads DGNSTLEEVGKQPEASEDPGKNILPPASMEHGGDLKPTSADP. 3 C2H2-type zinc fingers span residues 1370 to 1395, 1411 to 1433, and 1439 to 1462; these read FLCWKKGCNQVFKTSATLQTHFNEVH, YRCNQCSLAFKTIEKLQLHSQYH, and TMCCLCQRSFRTFQALKKHLETSH. Positions 1500–1539 are disordered; that stretch reads EEDKEEESDLEDKQSPTGSDSGSVQEDSGSEPKRALPFRK. The span at 1514–1526 shows a compositional bias: polar residues; sequence SPTGSDSGSVQED. Residues 1555-1579 form a C2H2-type 16 zinc finger; the sequence is YKCTVCKESFTQKNILLVHYNSVSH. S1600 is subject to Phosphoserine. The C2H2-type 17 zinc finger occupies 1606-1630; it reads FKCNTCNVAYSQSSTLEIHMRSVLH. Disordered stretches follow at residues 1639 to 1678, 1706 to 1738, and 1866 to 1943; these read LEAASGNSNGTGNSGGVSLSSSTPSPVGSSGANNTFTATN, NPISANIASPSEPKEANRKKLADMIASRQQQQQ, and LSQS…PRIA. Over residues 1643-1669 the composition is skewed to low complexity; that stretch reads SGNSNGTGNSGGVSLSSSTPSPVGSSG. Residues 1717–1727 are compositionally biased toward basic and acidic residues; the sequence is EPKEANRKKLA. Residues 1866-1878 are compositionally biased toward low complexity; it reads LSQSHSALLQPSQ. Over residues 1879-1902 the composition is skewed to basic and acidic residues; the sequence is HPEKKNKVVIKEKDKESQREREGP. The C2H2-type 18 zinc finger occupies 1990-2013; sequence LECDSCGKLFSNILILKSHQEHVH. Disordered stretches follow at residues 2037–2089 and 2211–2249; these read YPLR…AQPS and NKDSPYNFSNPPITSLEELKIDSRPPSPEPQKQEYWGSK. Over residues 2041–2066 the composition is skewed to pro residues; sequence PQTPEPPPPPPPPPPPPLPTAPPQPA. Residues 2152-2211 constitute a DNA-binding region (homeobox 1); that stretch reads NKRPRTRITDDQLRVLRQYFDINNSPSEEQIKEMADKSGLPQKVIKHWFRNTLFKERQRN. Positions 2214-2223 are enriched in polar residues; sequence SPYNFSNPPI. The segment at residues 2249–2308 is a DNA-binding region (homeobox 2); that stretch reads KRSSRTRFTDYQLRVLQDFFDANAYPKDDEFEQLSNLLNLPTRVIVVWFQNARQKARKNY. The C2H2-type 19; atypical zinc-finger motif lies at 2335–2358; the sequence is YQCKKCSLVFQRIFDLIKHQKKLC. K2356 participates in a covalent cross-link: Glycyl lysine isopeptide (Lys-Gly) (interchain with G-Cter in SUMO1). Disordered regions lie at residues 2383–2405 and 2429–2529; these read TPTSSSCSTPMPSQAYSTPAPSA and NSKA…PQQL. Low complexity predominate over residues 2458–2478; it reads QPKPEMQQQLEQLEQKTNAPQ. Residues 2479-2507 are compositionally biased toward pro residues; it reads PKLPQPAAPSLPQPPPQAPPPQCPLPQSS. Positions 2508–2521 are enriched in low complexity; the sequence is PSPSQLSHLPLKPL. Residues 2539 to 2561 form a C2H2-type 20 zinc finger; the sequence is YQCDQCKLAFPSFEHWQEHQQLH. The short motif at 2624–2626 is the Nuclear localization signal element; that stretch reads KRK. Residues 2628-2656 form a disordered region; it reads EEKASASPGENDSGTGGEEPQRDKRLRTT. S2634 bears the Phosphoserine mark. The homeobox 3 DNA-binding region spans 2650–2709; the sequence is DKRLRTTITPEQLEILYQKYLLDSNPTRKMLDHIAHEVGLKKRVVQVWFQNTRARERKGQ. A C2H2-type 21 zinc finger spans residues 2720–2743; the sequence is RRCPFCRALFKAKTALEAHIRSRH. Positions 2780–2789 are enriched in polar residues; it reads SHLPPSSSDG. The tract at residues 2780 to 2805 is disordered; it reads SHLPPSSSDGQGVPLSPVSKTMELSP. Residues S2795 and S2804 each carry the phosphoserine modification. K2815 is covalently cross-linked (Glycyl lysine isopeptide (Lys-Gly) (interchain with G-Cter in SUMO1); alternate). A Glycyl lysine isopeptide (Lys-Gly) (interchain with G-Cter in SUMO2); alternate cross-link involves residue K2815. The interval 2850–2877 is disordered; sequence AITDTTTGDEGNADNDSATGIATETKSS. S2900 and S2904 each carry phosphoserine. Residues 2920–2955 are disordered; it reads VDYSETSSLADPCSPSPGASGSAGKSGDGGDRPGQK. Residues 2929 to 2944 are compositionally biased toward low complexity; the sequence is ADPCSPSPGASGSAGK. A DNA-binding region (homeobox 4) is located at residues 2952–3011; that stretch reads PGQKRFRTQMTNLQLKVLKSCFNDYRTPTMLECEVLGNDIGLPKRVVQVWFQNARAKEKK. The C2H2-type 22 zinc-finger motif lies at 3032–3056; that stretch reads TECTLCGIKYSARLSVRDHIFSQQH. 2 disordered regions span residues 3145–3274 and 3415–3476; these read FTPA…AGTG and QQQQ…SASA. The segment covering 3147–3156 has biased composition (polar residues); it reads PANTALTSPK. Residues 3181–3199 are compositionally biased toward low complexity; it reads PSSASLSSPTPAQATMAMA. Residues 3200 to 3221 show a composition bias toward pro residues; the sequence is PQPPPQPQQPQPPVQQPPPPPA. Residues 3222–3234 are compositionally biased toward low complexity; it reads AQQIPAPQLTPQQ. Residues 3235-3267 are compositionally biased toward basic and acidic residues; sequence QRKDKDGEKGKEKEKAHKGKGEPLPVPKKEKGE. K3262 is covalently cross-linked (Glycyl lysine isopeptide (Lys-Gly) (interchain with G-Cter in SUMO1)). S3434 carries the post-translational modification Phosphoserine. Basic and acidic residues predominate over residues 3435–3453; sequence PDKDPAKESPKPEEQKNVP. S3457 is subject to Phosphoserine. Residues 3552–3576 form a C2H2-type 23 zinc finger; the sequence is YHCLACESALCGEEALSQHLESALH. A disordered region spans residues 3588–3726; sequence AKEHPSLLPH…TSVGTDTFRL (139 aa). 2 stretches are compositionally biased toward low complexity: residues 3605-3618 and 3645-3677; these read STASTSQSAAHSND and SRASAAKPPSFPPLSSSSTVTSSSCSTSGVQPS. Phosphoserine is present on S3616. The residue at position 3700 (S3700) is a Phosphoserine. Positions 3715–3726 are enriched in polar residues; that stretch reads GLTSVGTDTFRL.

In terms of assembly, interacts with ALKBH4 and PIAS3. Interacts with FNBP3. Interacts with ESR1, RUNX3, TRIM25, SMAD2 and SMAD3. Phosphorylated at Ser-2634 in both embryonic and adult brain. Phosphorylation at Ser-1600, Ser-2795, Ser-2804, Ser-2900, Ser-3434, Ser-3616 and Ser-3700 is restricted to the embryonic brain. Hyperphosphorylation in embryonic brain protects ZFHX3 from calpain/CAPN1-mediated degradation. In terms of processing, ubiquitinated, leading to its proteasomal degradation. Post-translationally, nuclear localization is essential for its sumoylation. In terms of tissue distribution, expressed in suprachiasmatic nucleus (SCN) of the brain (at protein level). Expressed in skeletal muscle. Levels of expression are high in myoblasts but low in differentiated muscle. Expressed in the heart, primarily in the atria.

Its subcellular location is the nucleus. The protein resides in the cytoplasm. Transcriptional regulator which can act as an activator or a repressor. Inhibits the enhancer element of the AFP gene by binding to its AT-rich core sequence. In concert with SMAD-dependent TGF-beta signaling can repress the transcription of AFP via its interaction with SMAD2/3. Regulates the circadian locomotor rhythms via transcriptional activation of neuropeptidergic genes which are essential for intercellular synchrony and rhythm amplitude in the suprachiasmatic nucleus (SCN) of the brain. Regulator of myoblasts differentiation through the binding to the AT-rich sequence of MYF6 promoter and promoter repression. Down-regulates the MUC5AC promoter in gastric cancer. In association with RUNX3, up-regulates CDKN1A promoter activity following TGF-beta stimulation. The protein is Zinc finger homeobox protein 3 (Zfhx3) of Mus musculus (Mouse).